A 412-amino-acid polypeptide reads, in one-letter code: Double C2-like domain-containing protein beta (412 aa).

Residues 1–36 (MTLRRRGEKATISIQEHMAIDVCPGPIRPIKQISDY) form a negatively regulates targeting to plasma membrane region. The segment at 1–90 (MTLRRRGEKA…EDVDQLFGAY (90 aa)) is mediates interaction with DYNLT1. Residues 38–123 (PRFPRGLPPD…PDADGYESDD (86 aa)) form a disordered region. Over residues 49–70 (GPRAAAPPDAPARPAVAGAGRR) the composition is skewed to low complexity. The span at 95–108 (GPSPGPSPARPPAK) shows a compositional bias: pro residues. Residues 112–123 (DEPDADGYESDD) are compositionally biased toward acidic residues. C2 domains follow at residues 126–250 (ALGT…SICL) and 266–399 (ERGR…ERWH). Positions 157, 163, 218, 220, 297, 303, 357, 359, and 365 each coordinate Ca(2+). The mediates interaction with STXBP3 stretch occupies residues 257-375 (DKTEDKSLEE…FIGGVVLGIH (119 aa)). Phosphoserine is present on Ser-411.

Interacts with the SNARE (soluble N-ethylmaleimide-sensitive factor attached protein receptor) complex composed of SNAP25, STX1A and VAMP2; the interaction is calcium-dependent and competitive with SYT1. Interacts with STX4; the interaction is calcium-dependent, increased by insulin and glucose, and mediates vesicle fusion with plasma membrane in pancreatic cells and adipocytes. Interacts with STXBP3; the interaction is direct, occurs at the cell membrane and regulates glucose-stimulated insulin secretion. May interact with UNC13A; the interaction mediates targeting to the plasma membrane. Interacts with cytoplasmic dynein light chain DYNLT1. Ca(2+) serves as cofactor. In terms of tissue distribution, widely expressed with highest levels in brain and kidney. Expressed in pancreatic islet cells (at protein level).

It is found in the cytoplasm. It localises to the cytoplasmic granule. Its subcellular location is the cell membrane. In terms of biological role, calcium sensor which positively regulates SNARE-dependent fusion of vesicles with membranes. Binds phospholipids in a calcium-dependent manner and may act at the priming stage of fusion by modifying membrane curvature to stimulate fusion. Involved in calcium-triggered exocytosis in chromaffin cells and calcium-dependent spontaneous release of neurotransmitter in absence of action potentials in neuronal cells. Involved both in glucose-stimulated insulin secretion in pancreatic cells and insulin-dependent GLUT4 transport to the plasma membrane in adipocytes. In Homo sapiens (Human), this protein is Double C2-like domain-containing protein beta.